Consider the following 375-residue polypeptide: Actin, cytoplasmic (375 aa).

It belongs to the actin family.

The protein localises to the cytoplasm. Its subcellular location is the cytoskeleton. The enzyme catalyses ATP + H2O = ADP + phosphate + H(+). In terms of biological role, actins are highly conserved proteins that are involved in various types of cell motility and are ubiquitously expressed in all eukaryotic cells. The protein is Actin, cytoplasmic (MIC-ACT-1) of Sterkiella nova (Ciliate).